An 82-amino-acid chain; its full sequence is Large ribosomal subunit protein bL31 (82 aa).

Zn(2+)-binding residues include Cys-16, Cys-18, Cys-37, and Cys-40.

It belongs to the bacterial ribosomal protein bL31 family. Type A subfamily. Part of the 50S ribosomal subunit. Zn(2+) is required as a cofactor.

Its function is as follows. Binds the 23S rRNA. This Blochmanniella pennsylvanica (strain BPEN) protein is Large ribosomal subunit protein bL31.